A 339-amino-acid chain; its full sequence is Uroporphyrinogen decarboxylase (339 aa).

Residues 21–25, Asp-71, Tyr-147, Ser-202, and His-315 each bind substrate; that span reads RQAGR.

It belongs to the uroporphyrinogen decarboxylase family. In terms of assembly, homodimer.

The protein resides in the cytoplasm. The enzyme catalyses uroporphyrinogen III + 4 H(+) = coproporphyrinogen III + 4 CO2. The protein operates within porphyrin-containing compound metabolism; protoporphyrin-IX biosynthesis; coproporphyrinogen-III from 5-aminolevulinate: step 4/4. In terms of biological role, catalyzes the decarboxylation of four acetate groups of uroporphyrinogen-III to yield coproporphyrinogen-III. The sequence is that of Uroporphyrinogen decarboxylase from Helicobacter pylori (strain Shi470).